The primary structure comprises 1194 residues: MRHSLECIQANQIFPRKQLIREDENLQVPFLELHGESTEYVGRAEDAIIALSNYRLHIKFKESLVNVPLQLIESVECRDIFQLHLTCKDCKVIRCQFPTFEQCQDWLKRLNNAIRPPGKIEDLFSFAYHAWCMEVYASEKEQHGDLCRPGEHVTSRFKNEVERMGFDMNNAWRISNINEKYKLCGSYPQELIVPAWITDKELESVAGFRSWKRIPAVIYRHQSNGAVIARCGQPEVSWWGWRNADDEHLVQSVAKACASDSQSSVGKVSTRNSCRGFPNAGDLSDVEFDASLSNASGTESLALQPQKLLILDARSYAAAVANRAKGGGCECPEYYPNCEVVFMGMANIHSIRRSFQSLRLLCTQMPDPGNWLSALESTKWLHHLSVLLKSALLVVHAVDRDQRPVLVHCSDGWDRTPQIVALAKLLLDPYYRTVEGFQVLVEMEWLDFGHKFADRCGHGENSDDLNERCPVFLQWLDCVHQLQRQFPCSFEFNEAFLVKLVQHTYSCLFGTFLCNNAKERGEKQTQERTCSVWSLLRAGNKAFKNLLYSSQSEAVLYPVCHVRNLMLWSAVYLPCPSPSTPTDDSCAPYPAPGTSPDEPPLSRLPKTRSFDNLTTTCDNMVPLASRRSSDPSLNEKWQEHGRSLELSSFAGSGEEVPAIDSLRRPSRLLGGAELSVAAGVAEGQMENILQEATKEESGVEEPTHREHTEVPEVKEEAPLAKESRTAAQGSGVLYQEPQLDDATLRSHLGPSLSSFSQGIPEHREVGHSVLSSSLPASLRGEDSQEVPVEQPQVENIAEDRENVVPAVPVDVKIGLGTSESSPLLPSQVPFETRGPHMNNSVHMLLEDKVKSESGPQLHHRPCLASSGRFSGKDMLPIAPEPRSAERPQWDSVLHRTSSPGNTLSLMMQAPCALPLDKCRQRIVCNGALETENKASEQPAGFDTLQKYPTPNGHCANGETGRSKDSLSHQLSATSYSSAHSCSRNLHHKWLNSHSGRPSTTNSPEQPSRSHLDDDGMPVYTDTIQQRLRQIESGHQQEVETLKKQVQELKSRLESQYLTSSLRFNGDFGDEVTSIPDSESNLDQNCLSRCSTEIFSEASWEQVDKQDTEMTRWLPDHLAAHCYACDSAFWLASRKHHCRNCGNVFCSSCCNQKVPVPSQQLFEPSRVCKSCYSSLHPTSSSIDLELDKPIAATSN.

Position 4 is a phosphoserine (Ser-4). The region spanning 151–572 (EHVTSRFKNE…RNLMLWSAVY (422 aa)) is the Myotubularin phosphatase domain. 3 residues coordinate a 1,2-diacyl-sn-glycero-3-phospho-(1D-myo-inositol-3,5-bisphosphate): Asn-322, Asn-347, and Ile-348. Asn-322, Asn-347, and Ile-348 together coordinate a 1,2-diacyl-sn-glycero-3-phospho-(1D-myo-inositol-3-phosphate). The Phosphocysteine intermediate role is filled by Cys-409. Ser-410, Asp-411, Gly-412, Trp-413, Asp-414, Arg-415, Lys-451, and Arg-455 together coordinate a 1,2-diacyl-sn-glycero-3-phospho-(1D-myo-inositol-3,5-bisphosphate). A 1,2-diacyl-sn-glycero-3-phospho-(1D-myo-inositol-3-phosphate) is bound by residues Ser-410, Asp-411, Gly-412, Trp-413, Asp-414, and Arg-415. Residue Arg-455 participates in a 1,2-diacyl-sn-glycero-3-phospho-(1D-myo-inositol-3-phosphate) binding. The disordered stretch occupies residues 583–609 (DDSCAPYPAPGTSPDEPPLSRLPKTRS). Pro residues predominate over residues 589–599 (YPAPGTSPDEP). A phosphoserine mark is found at Ser-609, Ser-629, Ser-643, and Ser-647. Residues 693 to 724 (TKEESGVEEPTHREHTEVPEVKEEAPLAKESR) show a composition bias toward basic and acidic residues. Disordered regions lie at residues 693 to 731 (TKEE…QGSG), 852 to 871 (ESGP…RFSG), and 876 to 897 (PIAP…HRTS). A Phosphothreonine modification is found at Thr-725. Position 904 is a phosphoserine (Ser-904). 2 disordered regions span residues 932–971 (NKAS…HQLS) and 988–1017 (KWLN…DGMP). Over residues 991–1006 (NSHSGRPSTTNSPEQP) the composition is skewed to polar residues. The stretch at 1025 to 1058 (QRLRQIESGHQQEVETLKKQVQELKSRLESQYLT) forms a coiled coil. Ser-1060 bears the Phosphoserine mark. The FYVE-type zinc finger occupies 1115–1175 (DHLAAHCYAC…VCKSCYSSLH (61 aa)). Zn(2+)-binding residues include Cys-1121, Cys-1124, Cys-1137, Cys-1140, Cys-1145, Cys-1148, Cys-1167, and Cys-1170.

The protein belongs to the protein-tyrosine phosphatase family. Non-receptor class myotubularin subfamily. Forms heterodimers with MTMR4 that recruit both CEP55 and PLK1; occurs during early mitosis, regulates the phosphorylation of CEP55 by PLK1 and its recruitment to the midbody where it mediates cell abscission.

The protein resides in the cytoplasm. The protein localises to the cytosol. It is found in the membrane. The enzyme catalyses a 1,2-diacyl-sn-glycero-3-phospho-(1D-myo-inositol-3,5-bisphosphate) + H2O = a 1,2-diacyl-sn-glycero-3-phospho-(1D-myo-inositol-5-phosphate) + phosphate. The catalysed reaction is a 1,2-diacyl-sn-glycero-3-phospho-(1D-myo-inositol-3-phosphate) + H2O = a 1,2-diacyl-sn-glycero-3-phospho-(1D-myo-inositol) + phosphate. It catalyses the reaction 1,2-dihexadecanoyl-sn-glycero-3-phospho-(1D-myo-inositol-3-phosphate) + H2O = 1,2-dihexadecanoyl-sn-glycero-3-phospho-(1D-myo-inositol) + phosphate. It carries out the reaction 1,2-dioctanoyl-sn-glycero-3-phospho-(1-D-myo-inositol-3-phosphate) + H2O = 1,2-dioctanoyl-sn-glycero-3-phospho-(1D-myo-inositol) + phosphate. The enzyme catalyses 1,2-dihexadecanoyl-sn-glycero-3-phospho-(1D-myo-inositol-3,5-phosphate) + H2O = 1,2-dihexadecanoyl-sn-glycero-3-phospho-(1D-myo-inositol-5-phosphate) + phosphate. Its function is as follows. Lipid phosphatase that specifically dephosphorylates the D-3 position of phosphatidylinositol 3-phosphate and phosphatidylinositol 3,5-bisphosphate, generating phosphatidylinositol and phosphatidylinositol 5-phosphate. Decreases the levels of phosphatidylinositol 3-phosphate, a phospholipid found in cell membranes where it acts as key regulator of both cell signaling and intracellular membrane traffic. Could also have a molecular sequestering/adapter activity and regulate biological processes independently of its phosphatase activity. It includes the regulation of midbody abscission during mitotic cytokinesis. In Rattus norvegicus (Rat), this protein is Phosphatidylinositol-3,5-bisphosphate 3-phosphatase MTMR3.